Consider the following 335-residue polypeptide: Protein PXR1 (335 aa).

Positions 25 to 71 (KSRFGHKYLEKLGWEPGKGLGHASHAMSTHIKVTIKDDTMGLGAKLK) constitute a G-patch domain. The interval 155-310 (DDAEDAKVSG…PPTISTRLSV (156 aa)) is disordered. The span at 163 to 175 (SGKHRDRKSRAKR) shows a compositional bias: basic residues. Over residues 183–209 (LKEKCRDIDRTRKSKRKEKEQEKEKNR) the composition is skewed to basic and acidic residues. Basic residues predominate over residues 226-257 (KKDKKDKKEKKEKKEKKEKKEKKHKEKSNKRL).

The protein belongs to the PINX1 family.

The protein localises to the nucleus. Its subcellular location is the nucleolus. Functionally, involved in rRNA-processing at A0, A1 and A2 sites and negatively regulates telomerase. The sequence is that of Protein PXR1 (PXR1) from Eremothecium gossypii (strain ATCC 10895 / CBS 109.51 / FGSC 9923 / NRRL Y-1056) (Yeast).